We begin with the raw amino-acid sequence, 771 residues long: Post-GPI attachment to proteins factor 6 (771 aa).

An N-terminal signal peptide occupies residues 1-34; the sequence is MGRAGTGTGGEAVAAVVAGPLLLLLLARPPPASA. The Extracellular segment spans residues 35-545; the sequence is GYSGKSEVGL…STAQTVAQQR (511 aa). Asparagine 144 carries N-linked (GlcNAc...) asparagine glycosylation. Residues 322–343 are disordered; sequence FNASSGLLSPSPDHQDLGRSGR. Over residues 334–343 the composition is skewed to basic and acidic residues; the sequence is DHQDLGRSGR. 2 N-linked (GlcNAc...) asparagine glycosylation sites follow: asparagine 407 and asparagine 431. Positions 497–533 constitute an EGF-like domain; sequence PCLNDCGPYGQCLLLRRHSYLYASCSCKAGWRGWSCT. Intrachain disulfides connect cysteine 498/cysteine 508, cysteine 502/cysteine 521, and cysteine 523/cysteine 532. Residues 546 to 566 traverse the membrane as a helical segment; it reads AATLLLTLSNLMFLAPIAVSV. Residues 567–568 are Cytoplasmic-facing; the sequence is RR. A helical membrane pass occupies residues 569 to 589; the sequence is FFLVEASVYAYTMFFSTFYHA. The Extracellular segment spans residues 590–605; that stretch reads CDQPGEAVLCILSYDT. Residues 606–626 traverse the membrane as a helical segment; that stretch reads LQYCDFLGSGAAIWVTILCMA. The Cytoplasmic segment spans residues 627–629; it reads RLK. A helical membrane pass occupies residues 630-650; sequence TVLKYVLFLLGTLVIAMSLQL. Residues 651–653 are Extracellular-facing; the sequence is DRR. A helical membrane pass occupies residues 654-674; sequence GMWNMLGPCLFAFVIMASMWA. At 675–690 the chain is on the cytoplasmic side; it reads YRCGHRRQCYPTSWQR. The helical transmembrane segment at 691–711 threads the bilayer; that stretch reads WAFYLLPGVSMASVGIAIYTS. Topologically, residues 712-717 are extracellular; that stretch reads MMTSDN. The helical transmembrane segment at 718 to 738 threads the bilayer; it reads YYYTHSIWHILLAGSAALLLP. The Cytoplasmic segment spans residues 739–771; the sequence is PPDQPAEPWACSQKFPCHYQICKNDREELYAVT.

It belongs to the TMEM8 family. Post-translationally, glycosylated. Expressed in pancreas, placenta, spleen, liver, kidney, bone marrow, peripheral blood leukocytes and tonsil.

The protein localises to the cell membrane. It localises to the lysosome membrane. The catalysed reaction is a 1,2-diacyl-sn-glycero-3-phosphocholine + H2O = a 1-acyl-sn-glycero-3-phosphocholine + a fatty acid + H(+). In terms of biological role, involved in the lipid remodeling steps of GPI-anchor maturation. Lipid remodeling steps consist in the generation of 2 saturated fatty chains at the sn-2 position of GPI-anchor proteins (GPI-AP). Has phospholipase A2 activity that removes an acyl-chain at the sn-2 position of GPI-anchors during the remodeling of GPI. Required for the shedding of the GPI-AP CRIPTO, but not CFC1, at the cell surface. Shedding of CRIPTO modulates Nodal signaling by allowing soluble CRIPTO to act as a Nodal coreceptor on other cells. Also indirectly involved in the translocation of RAC1 from the cytosol to the plasma membrane by maintaining the steady state amount of CAV1-enriched plasma membrane subdomains, stabilizing RAC1 at the plasma membrane. In contrast to myomaker (TMEM8C), has no fusogenic activity. The chain is Post-GPI attachment to proteins factor 6 from Homo sapiens (Human).